A 218-amino-acid polypeptide reads, in one-letter code: Monomethylamine corrinoid protein 1 (218 aa).

Residues 1–91 (MANQEIFDKL…ELEKTKVEGE (91 aa)) form the B12-binding N-terminal domain. Residues 94–218 (TGLAITFVAE…AAKVALNIMK (125 aa)) enclose the B12-binding domain. His107 contacts methylcob(III)alamin.

This sequence belongs to the methylamine corrinoid protein family. As to quaternary structure, can form a complex with MtmB.

The protein operates within one-carbon metabolism; methanogenesis from methylamine. In terms of biological role, acts as a methyl group carrier between MtmB and MtbA. This chain is Monomethylamine corrinoid protein 1 (mtmC1), found in Methanosarcina acetivorans (strain ATCC 35395 / DSM 2834 / JCM 12185 / C2A).